The primary structure comprises 36 residues: Probable non-specific lipid-transfer protein (36 aa).

It belongs to the plant LTP family. Phosphorylated by Ca(2+)-dependent protein kinase.

Functionally, plant non-specific lipid-transfer proteins transfer phospholipids as well as galactolipids across membranes. May play a role in wax or cutin deposition in the cell walls of expanding epidermal cells and certain secretory tissues. The protein is Probable non-specific lipid-transfer protein of Pinus pinea (Italian stone pine).